The primary structure comprises 434 residues: RHOMBOID-like protein 9, chloroplastic (434 aa).

The N-terminal 68 residues, 1-68, are a transit peptide targeting the chloroplast; it reads MALFPLHHEV…SPRRRLCLVR (68 aa). Helical transmembrane passes span 182–202, 209–229, 238–258, 267–287, 289–309, 326–346, 352–372, and 399–419; these read FYAV…EAAA, MGLL…ILAG, MFLH…LTFG, LFTF…MSFL, TADP…AWLV, LFQK…FGPI, LGAL…LQLG, and FLLF…IGDG.

It belongs to the peptidase S54 family.

It is found in the plastid. The protein resides in the chloroplast membrane. In terms of biological role, probable rhomboid-type serine protease that catalyzes intramembrane proteolysis. The chain is RHOMBOID-like protein 9, chloroplastic from Arabidopsis thaliana (Mouse-ear cress).